Reading from the N-terminus, the 299-residue chain is Protein FAM228A (299 aa).

Positions 135-201 (AKGTSYQHGR…GRNRYKGASS (67 aa)) are disordered. Over residues 146 to 159 (KTHDTQKEAKETEK) the composition is skewed to basic and acidic residues. Serine 264 carries the post-translational modification Phosphoserine.

Belongs to the FAM228 family.

This chain is Protein FAM228A (Fam228a), found in Mus musculus (Mouse).